Here is a 655-residue protein sequence, read N- to C-terminus: p-hydroxybenzoic acid efflux pump subunit AaeB (655 aa).

A run of 11 helical transmembrane segments spans residues 13–33 (FAVKLACAIVLALFIGFHFQL), 38–58 (WAVLTAAIVAAGPAFAAGGEP), 69–89 (LRIIGTFIGCIAALIIIISMI), 93–113 (LLMILVCCVWAGFCTWISSLV), 121–141 (WGLSGYTALIIVITIQTEPLL), 152–172 (EIVIGIGCAILADLLFSPRSI), 370–390 (LFWLWTGWTSGNGAMVMIAVV), 407–427 (FIYGTLAALPLGLLYFLVIIP), 431–451 (QSMLLLCLSLAVLGFFIGIEV), 459–479 (MGALASTINIIVLDNPMTFHF), and 482–502 (FLDSALGQIVGCMLAFIVILL).

This sequence belongs to the aromatic acid exporter ArAE (TC 2.A.85) family.

The protein resides in the cell inner membrane. Its function is as follows. Forms an efflux pump with AaeA. Could function as a metabolic relief valve, allowing to eliminate certain compounds when they accumulate to high levels in the cell. This is p-hydroxybenzoic acid efflux pump subunit AaeB from Salmonella agona (strain SL483).